A 234-amino-acid polypeptide reads, in one-letter code: Enolase-phosphatase E1 (234 aa).

Mg(2+)-binding residues include aspartate 13 and glutamate 15. Residues 127–128 and lysine 164 contribute to the substrate site; that span reads SS. Aspartate 191 serves as a coordination point for Mg(2+).

This sequence belongs to the HAD-like hydrolase superfamily. MasA/MtnC family. In terms of assembly, monomer. It depends on Mg(2+) as a cofactor.

The protein resides in the cytoplasm. Its subcellular location is the nucleus. The catalysed reaction is 5-methylsulfanyl-2,3-dioxopentyl phosphate + H2O = 1,2-dihydroxy-5-(methylsulfanyl)pent-1-en-3-one + phosphate. It participates in amino-acid biosynthesis; L-methionine biosynthesis via salvage pathway; L-methionine from S-methyl-5-thio-alpha-D-ribose 1-phosphate: step 3/6. It functions in the pathway amino-acid biosynthesis; L-methionine biosynthesis via salvage pathway; L-methionine from S-methyl-5-thio-alpha-D-ribose 1-phosphate: step 4/6. Bifunctional enzyme that catalyzes the enolization of 2,3-diketo-5-methylthiopentyl-1-phosphate (DK-MTP-1-P) into the intermediate 2-hydroxy-3-keto-5-methylthiopentenyl-1-phosphate (HK-MTPenyl-1-P), which is then dephosphorylated to form the acireductone 1,2-dihydroxy-3-keto-5-methylthiopentene (DHK-MTPene). The chain is Enolase-phosphatase E1 from Podospora anserina (strain S / ATCC MYA-4624 / DSM 980 / FGSC 10383) (Pleurage anserina).